The primary structure comprises 402 residues: UPF0261 protein mll9388 (402 aa).

It belongs to the UPF0261 family.

The polypeptide is UPF0261 protein mll9388 (Mesorhizobium japonicum (strain LMG 29417 / CECT 9101 / MAFF 303099) (Mesorhizobium loti (strain MAFF 303099))).